The sequence spans 118 residues: Small ribosomal subunit protein uS13 (118 aa).

Residues 91–118 (HRRSLPVRGQRTKTNARTRKGPRKPIRK) form a disordered region.

Belongs to the universal ribosomal protein uS13 family. Part of the 30S ribosomal subunit. Forms a loose heterodimer with protein S19. Forms two bridges to the 50S subunit in the 70S ribosome.

In terms of biological role, located at the top of the head of the 30S subunit, it contacts several helices of the 16S rRNA. In the 70S ribosome it contacts the 23S rRNA (bridge B1a) and protein L5 of the 50S subunit (bridge B1b), connecting the 2 subunits; these bridges are implicated in subunit movement. Contacts the tRNAs in the A and P-sites. This is Small ribosomal subunit protein uS13 from Marinomonas sp. (strain MWYL1).